We begin with the raw amino-acid sequence, 125 residues long: Histone H2A (125 aa).

A compositionally biased stretch (basic residues) spans 1–18 (MSGRGKGGKAKGKSKSRS). The disordered stretch occupies residues 1–23 (MSGRGKGGKAKGKSKSRSSRAGL). N-acetylserine is present on serine 2. At serine 2 the chain carries Phosphoserine. Residue glutamine 104 is modified to N5-methylglutamine.

The protein belongs to the histone H2A family. The nucleosome is a histone octamer containing two molecules each of H2A, H2B, H3 and H4 assembled in one H3-H4 heterotetramer and two H2A-H2B heterodimers. The octamer wraps approximately 147 bp of DNA.

Its subcellular location is the nucleus. It is found in the chromosome. In terms of biological role, core component of nucleosome. Nucleosomes wrap and compact DNA into chromatin, limiting DNA accessibility to the cellular machineries which require DNA as a template. Histones thereby play a central role in transcription regulation, DNA repair, DNA replication and chromosomal stability. DNA accessibility is regulated via a complex set of post-translational modifications of histones, also called histone code, and nucleosome remodeling. This Urechis caupo (Innkeeper worm) protein is Histone H2A.